We begin with the raw amino-acid sequence, 158 residues long: Ribosomal RNA large subunit methyltransferase H (158 aa).

Residues Leu-74, Gly-105, and 124–129 (LGPLTL) contribute to the S-adenosyl-L-methionine site.

Belongs to the RNA methyltransferase RlmH family. In terms of assembly, homodimer.

It is found in the cytoplasm. The enzyme catalyses pseudouridine(1915) in 23S rRNA + S-adenosyl-L-methionine = N(3)-methylpseudouridine(1915) in 23S rRNA + S-adenosyl-L-homocysteine + H(+). Specifically methylates the pseudouridine at position 1915 (m3Psi1915) in 23S rRNA. The polypeptide is Ribosomal RNA large subunit methyltransferase H (Xylella fastidiosa (strain Temecula1 / ATCC 700964)).